The following is a 602-amino-acid chain: MHCHNLNNIRNFSIIAHIDHGKSTLADRLLELTNTVAARDMQEQLLDDMDLERERGITIKAHPVTMYYKGNDGQTYQINLIDTPGHVDFTYEVSRSLAACEGAILVVDAGQGVQAQSLANVHLALERNLEIVPVINKIDLPAADVEGVRKQIEDVIGLDASDAIGCSAKSGLGVKDVLERILTAVPPPQEPKDNLLRALVFDSHYDVYRGVMVYIRVMSGEIKRGSLIKMMATNKNFEVLEVGMFTPKEKPVEQLRPGEVGYMIANIKTPSDVKIGDTITLQKYPAPEALPGFKIISPVVFAGIYPIDATEFEGLRDALGKLQLNDSALHIEQESSTALGFGFRCGFLGLLHLEIVFERIQREFNIDIISTAPSVIYRFTLDDGVVKTVDNPAHYPDPTFIRMVEEPWVKCHIMIPSEYLGAIMNLGMDKRGVCTKTETMDARRLLLTYRLPLNEIITDFNDKLKSITKGYGSFDYEFDCYEPSEIIKLEIRVNEEPVDAFSCLVHRTKAESKGRAICAKLVEVIPMQLFKVPIQAAIGGKVVARETIRAITKNVTAKCYGGDISRKRKLWEKQKKGKKRMKEIGKVNIPQSAFMEVLKAGD.

One can recognise a tr-type G domain in the interval 7 to 189 (NNIRNFSIIA…RILTAVPPPQ (183 aa)). GTP contacts are provided by residues 19-24 (DHGKST) and 136-139 (NKID).

Belongs to the TRAFAC class translation factor GTPase superfamily. Classic translation factor GTPase family. LepA subfamily.

The protein localises to the cell inner membrane. It catalyses the reaction GTP + H2O = GDP + phosphate + H(+). Required for accurate and efficient protein synthesis under certain stress conditions. May act as a fidelity factor of the translation reaction, by catalyzing a one-codon backward translocation of tRNAs on improperly translocated ribosomes. Back-translocation proceeds from a post-translocation (POST) complex to a pre-translocation (PRE) complex, thus giving elongation factor G a second chance to translocate the tRNAs correctly. Binds to ribosomes in a GTP-dependent manner. The polypeptide is Elongation factor 4 (Protochlamydia amoebophila (strain UWE25)).